We begin with the raw amino-acid sequence, 138 residues long: UPF0251 protein Dole_1957 (138 aa).

Belongs to the UPF0251 family.

This chain is UPF0251 protein Dole_1957, found in Desulfosudis oleivorans (strain DSM 6200 / JCM 39069 / Hxd3) (Desulfococcus oleovorans).